Reading from the N-terminus, the 662-residue chain is Probable quinol oxidase subunit 1 (662 aa).

2 helical membrane-spanning segments follow: residues 14–34 (WMITMAQIGAPFLVIGLIAVI) and 58–78 (IMYLICAVLMFVRGGIDALLI). Fe(II)-heme a is bound at residue H102. 8 helical membrane-spanning segments follow: residues 103–123 (GVIMIIFMAMPFIFGLWNIVV), 140–160 (VSFWLFFAGMILFNLSFIIGG), 187–207 (IAIQISGLGTLATGINFFVTI), 228–248 (FITTLIVILAFPPLTVALALM), 273–293 (FFWVWGHPEVYIVILPAFGIY), 311–331 (MVWATAGIAFLSFLVWVHHFF), 336–356 (GALINSFFSISTMLIGIPTGV), and 376–396 (MLFSLAFIPNFLLGGVTGVML). The Cu cation site is built by H279, Y283, H328, and H329. A cross-link (1'-histidyl-3'-tyrosine (His-Tyr)) is located at residues 279–283 (HPEVY). H414 is a heme a3 binding site. The next 5 membrane-spanning stretches (helical) occupy residues 415–435 (FHYTLVTGVVFACLAGLIFWY), 451–471 (CFWFFMIGFNVCFLPQFILGL), 493–513 (ISTIGALLMAIGFLFLVVSIV), 587–604 (PVGFWIGIFMTIGGFFLI), and 608–627 (VIPALICLFGIFGTMIYRSF). Fe(II)-heme a is bound at residue H416.

The protein belongs to the heme-copper respiratory oxidase family. The cofactor is Cu cation. Requires ferriheme a as cofactor. It depends on Heme A3. as a cofactor.

It is found in the cell membrane. It carries out the reaction 2 a quinol + O2 = 2 a quinone + 2 H2O. The protein operates within energy metabolism; oxidative phosphorylation. Catalyzes quinol oxidation with the concomitant reduction of oxygen to water. The polypeptide is Probable quinol oxidase subunit 1 (qoxB) (Staphylococcus aureus (strain USA300)).